The primary structure comprises 280 residues: Vitamin B12-binding protein (280 aa).

Positions Met1 to Ala27 are cleaved as a signal peptide. The 248-residue stretch at Arg30 to Ala277 folds into the Fe/B12 periplasmic-binding domain. Tyr57 is a binding site for cyanocob(III)alamin. Cysteines 190 and 266 form a disulfide.

Belongs to the BtuF family. As to quaternary structure, the complex is composed of two ATP-binding proteins (BtuD), two transmembrane proteins (BtuC) and a solute-binding protein (BtuF).

It localises to the periplasm. Functionally, part of the ABC transporter complex BtuCDF involved in vitamin B12 import. Binds vitamin B12 and delivers it to the periplasmic surface of BtuC. The chain is Vitamin B12-binding protein from Yersinia pseudotuberculosis serotype O:1b (strain IP 31758).